The chain runs to 158 residues: Ribonuclease HI (158 aa).

The RNase H type-1 domain maps to 3 to 144; that stretch reads ELKLIHIFTD…CDQLARAAAE (142 aa). Residues Asp-12, Glu-50, Asp-72, and Asp-136 each contribute to the Mg(2+) site.

The protein belongs to the RNase H family. In terms of assembly, monomer. The cofactor is Mg(2+).

The protein resides in the cytoplasm. It catalyses the reaction Endonucleolytic cleavage to 5'-phosphomonoester.. Functionally, endonuclease that specifically degrades the RNA of RNA-DNA hybrids. This is Ribonuclease HI from Shewanella oneidensis (strain ATCC 700550 / JCM 31522 / CIP 106686 / LMG 19005 / NCIMB 14063 / MR-1).